A 1342-amino-acid chain; its full sequence is MVYSYTEKKRIRKDFGKRPQVLDVPYLLSIQLDSFQKFIEQDPEGQYGLEAAFRSVFPIQSYSGNSELQYVSYRLGEPVFDVKECQIRGVTYSAPLRVKLRLVIYEREAPEGTVKDIKEQEVYMGEIPLMTDNGTFVINGTERVIVSQLHRSPGVFFDSDKGKTHSSGKVLYNARIIPYRGSWLDFEFDPKDNLFVRIDRRRKLPATIILRALNYTTEQILDLFFEKVVFEIRDNKLQMELIPERLRGETASFDIEANGKVYVEKGRRITARHIRQLEKDDIKHIEVPVEYIAGKVAAKDYIDEATGELICPANMELSLDLLAKLSQSGHKRIETLFTNDLDHGPYISETVRVDPTNDRLSALVEIYRMMRPGEPPTREAAESLFENLFFSEDRYDLSAVGRMKFNRSLLRDEIEGSGILSKDDIIEVMKKLIDIRNGKGEVDDIDHLGNRRIRSVGEMAENQFRVGLVRVERAVKERLSLGDLDTLMPQDMINAKPISAAVKEFFGSSQLSQFMDQNNPLSEITHKRRISALGPGGLTRERAGFEVRDVHPTHYGRVCPIETPEGPNIGLINSLSVYAQTNEYGFLETPYRKVTDGVVTDEIHYLSAIEEGNYVIAQANSNLDENGHFVEDLVTCRSKGESSLFSRDQVDYMDVSTQQVVSVGASLIPFLEHDDANRALMGANMQRQAVPTLRADKPLVGTGMERAVAVDSGVTAVAKRGGTVQYVDASRIVIKVNEDEMYPGEAGIDIYNLTKYTRSNQNTCINQMPCVSLGEPIERGDVLADGPSTDLGELALGQNMRVAFMPWNGYNFEDSILVSERVVQEDRFTTIHIQELACVSRDTKLGPEEITADIPNVGEAALSKLDESGIVYIGAEVTGGDILVGKVTPKGETQLTPEEKLLRAIFGEKASDVKDSSLRVPNGVSGTVIDVQVFTRDGVEKDKRALEIEEMQLKQAKKDLSEELQILEAGLFSRIYAVLVSGGVEAEKLDKLPRDRWLELGLTDEEKQNQLEQLAEQYDELKHEFEKKLEAKRRKITQGDDLAPGVLKIVKVYLAVKRRIQPGDKMAGRHGNKGVISKINPIEDMPHDANGTPVDIVLNPLGVPSRMNIGQILETHLGMAAKGIGDKINAMLKQQQEVAKLREFIQRAYDLGADVRQKVDLNTFSDEEVLRLAENLRKGMPIATPVFDGAKEAEIKELLQLGDLPTSGQITLFDGRTGEQFERPVTVGYMYMLKLNHLVDDKMHARSTGSYSLVTQQPLGGKAQFGGQRFGEMEVWALEAYGAAYTLQEMLTVKSDDVNGRTKMYKNIVDGNHQMEPGMPESFNVLLKEIRSLGINIELEDE.

The protein belongs to the RNA polymerase beta chain family. The RNAP catalytic core consists of 2 alpha, 1 beta, 1 beta' and 1 omega subunit. When a sigma factor is associated with the core the holoenzyme is formed, which can initiate transcription.

It catalyses the reaction RNA(n) + a ribonucleoside 5'-triphosphate = RNA(n+1) + diphosphate. Functionally, DNA-dependent RNA polymerase catalyzes the transcription of DNA into RNA using the four ribonucleoside triphosphates as substrates. The sequence is that of DNA-directed RNA polymerase subunit beta from Klebsiella pneumoniae subsp. pneumoniae (strain ATCC 700721 / MGH 78578).